A 304-amino-acid polypeptide reads, in one-letter code: Large ribosomal subunit protein uL18 (304 aa).

This sequence belongs to the universal ribosomal protein uL18 family. Component of a hexameric 5S RNP precursor complex, composed of 5S RNA, RRS1, RPF2, RPL5, RPL11 and SYO1; this complex acts as a precursor for ribosome assembly.

It localises to the cytoplasm. Its function is as follows. Component of the ribosome, a large ribonucleoprotein complex responsible for the synthesis of proteins in the cell. The small ribosomal subunit (SSU) binds messenger RNAs (mRNAs) and translates the encoded message by selecting cognate aminoacyl-transfer RNA (tRNA) molecules. The large subunit (LSU) contains the ribosomal catalytic site termed the peptidyl transferase center (PTC), which catalyzes the formation of peptide bonds, thereby polymerizing the amino acids delivered by tRNAs into a polypeptide chain. The nascent polypeptides leave the ribosome through a tunnel in the LSU and interact with protein factors that function in enzymatic processing, targeting, and the membrane insertion of nascent chains at the exit of the ribosomal tunnel. In Chaetomium thermophilum (strain DSM 1495 / CBS 144.50 / IMI 039719) (Thermochaetoides thermophila), this protein is Large ribosomal subunit protein uL18.